The chain runs to 606 residues: Leucine-rich repeat and immunoglobulin-like domain-containing nogo receptor-interacting protein 2 (606 aa).

Residues 1-27 form the signal peptide; sequence MLHTAIPCWQPFLGLAVVLLLMGSTIG. In terms of domain architecture, LRRNT spans 28-57; sequence CPARCECSAQNKSVSCHRRRLLAIPEGIPI. Over 28 to 545 the chain is Extracellular; that stretch reads CPARCECSAQ…LDLKTILVST (518 aa). A glycan (N-linked (GlcNAc...) asparagine) is linked at Asn-38. LRR repeat units lie at residues 58-79, 82-103, 106-127, 130-151, 154-175, 178-199, 202-223, 226-247, 250-271, 274-295, 298-319, and 322-343; these read ETKI…EFIS, LLEE…AFNN, NLRS…VFTG, NLTK…MFQD, NLKS…AFSG, SLEQ…ALSH, SLIA…AFKR, HLKN…NSLY, NLTS…AFKH, YLTH…MFSD, RLQE…SFQG, and FLRV…VFSS. Asn-130 carries an N-linked (GlcNAc...) asparagine glycan. N-linked (GlcNAc...) asparagine glycosylation occurs at Asn-188. Residues Asn-250, Asn-260, and Asn-279 are each glycosylated (N-linked (GlcNAc...) asparagine). Asn-327 carries N-linked (GlcNAc...) asparagine glycosylation. The 55-residue stretch at 355 to 409 folds into the LRRCT domain; that stretch reads NPLACDCRLLWLLQRQPNLQFGGQQPMCAGPDTIRERSFKDFHSTALSFYFTCKK. A disulfide bridge connects residues Cys-432 and Cys-483. Asn-491, Asn-522, and Asn-527 each carry an N-linked (GlcNAc...) asparagine glycan. Residues 546-566 form a helical membrane-spanning segment; the sequence is AMGCFTFLGVVLFCFLLLFVW. At 567 to 606 the chain is on the cytoplasmic side; that stretch reads SRGKGKHKNSIDLEYVPRKNNGAVVEGEVAGPRRFNMKMI.

The protein localises to the membrane. The sequence is that of Leucine-rich repeat and immunoglobulin-like domain-containing nogo receptor-interacting protein 2 (Lingo2) from Mus musculus (Mouse).